The primary structure comprises 312 residues: Protein-methionine-sulfoxide reductase catalytic subunit MsrP (312 aa).

Positions M1–A47 form a signal peptide, tat-type signal. Mo-molybdopterin is bound by residues N74, Y77–E78, C133, T168, N216, R221, and S232–K234.

This sequence belongs to the MsrP family. In terms of assembly, heterodimer of a catalytic subunit (MsrP) and a heme-binding subunit (MsrQ). The cofactor is Mo-molybdopterin. In terms of processing, predicted to be exported by the Tat system. The position of the signal peptide cleavage has not been experimentally proven.

The protein resides in the periplasm. The enzyme catalyses L-methionyl-[protein] + a quinone + H2O = L-methionyl-(R)-S-oxide-[protein] + a quinol. Its function is as follows. Part of the MsrPQ system that repairs oxidized periplasmic proteins containing methionine sulfoxide residues (Met-O), using respiratory chain electrons. Thus protects these proteins from oxidative-stress damage caused by reactive species of oxygen and chlorine generated by the host defense mechanisms. MsrPQ is essential for the maintenance of envelope integrity under bleach stress, rescuing a wide series of structurally unrelated periplasmic proteins from methionine oxidation. The catalytic subunit MsrP is non-stereospecific, being able to reduce both (R-) and (S-) diastereoisomers of methionine sulfoxide. Involved in protection against reactive chlorine species (RCS) generated by chlorite and hypochlorite. This Azospira oryzae (strain ATCC BAA-33 / DSM 13638 / PS) (Dechlorosoma suillum) protein is Protein-methionine-sulfoxide reductase catalytic subunit MsrP.